Here is a 312-residue protein sequence, read N- to C-terminus: Malate dehydrogenase (312 aa).

Residues 7 to 13 (GAAGGIG) and aspartate 34 contribute to the NAD(+) site. Substrate contacts are provided by arginine 81 and arginine 87. NAD(+) contacts are provided by residues asparagine 94 and 117-119 (ITN). 2 residues coordinate substrate: asparagine 119 and arginine 153. Histidine 177 serves as the catalytic Proton acceptor. Position 227 (methionine 227) interacts with NAD(+).

The protein belongs to the LDH/MDH superfamily. MDH type 1 family. As to quaternary structure, homodimer.

It catalyses the reaction (S)-malate + NAD(+) = oxaloacetate + NADH + H(+). In terms of biological role, catalyzes the reversible oxidation of malate to oxaloacetate. The protein is Malate dehydrogenase of Salmonella agona (strain SL483).